The primary structure comprises 474 residues: MLGESEVRDKCGIVGIYSQDKKTGVASQIYYALYALQHRGQESAGISTFNGNDILTHRGMGLVCDVFNPEKLEELKGNVGIGHVRYSTTGESRIENSQPFWSEFQGGKIAIAHNGDIINSMELREELEEEGHNFVSTTDSEVICHLLSREYDEKPNMIYSIKRVSEQLVGSYSLVVLLNQDLYVVRDPVGIKPLAFARKGSTQIVASETVAFDVIGAEHVRDVQPGEILHLNRGKSYWVANAPNTRRAHCMFEYVYFARPDSVIDGRNVYRVRLNIGEALYREHPANADVVVPVPDSSIPAAIGYSRASGIPYGEGLIKNRYVGRTFIMPTQEERETAVKLKMNPIRSELEGKRIVLIDDSIVRGTTSRALIDIIRDAGAEEIHLRIGCPPIKSPCYYGIAMATKKELIASTRNVEEIRRIIGVDSLGYLSIESLVECIGIKKGFLCTGCLDGDYPTPLPSDISEYEAMRSCSR.

Positions 1 to 10 (MLGESEVRDK) are excised as a propeptide. Residue Cys11 is the Nucleophile of the active site. The 224-residue stretch at 11–234 (CGIVGIYSQD…PGEILHLNRG (224 aa)) folds into the Glutamine amidotransferase type-2 domain. Cys250 serves as a coordination point for [4Fe-4S] cluster. The Mg(2+) site is built by Ser297, Asp359, and Asp360. [4Fe-4S] cluster is bound by residues Cys396, Cys447, and Cys450.

In the C-terminal section; belongs to the purine/pyrimidine phosphoribosyltransferase family. Mg(2+) is required as a cofactor. The cofactor is [4Fe-4S] cluster.

It catalyses the reaction 5-phospho-beta-D-ribosylamine + L-glutamate + diphosphate = 5-phospho-alpha-D-ribose 1-diphosphate + L-glutamine + H2O. It functions in the pathway purine metabolism; IMP biosynthesis via de novo pathway; N(1)-(5-phospho-D-ribosyl)glycinamide from 5-phospho-alpha-D-ribose 1-diphosphate: step 1/2. Its function is as follows. Catalyzes the formation of phosphoribosylamine from phosphoribosylpyrophosphate (PRPP) and glutamine. This chain is Amidophosphoribosyltransferase, found in Methanothermobacter thermautotrophicus (strain ATCC 29096 / DSM 1053 / JCM 10044 / NBRC 100330 / Delta H) (Methanobacterium thermoautotrophicum).